The sequence spans 83 residues: Small ribosomal subunit protein uS17 (83 aa).

The protein belongs to the universal ribosomal protein uS17 family. Part of the 30S ribosomal subunit.

Functionally, one of the primary rRNA binding proteins, it binds specifically to the 5'-end of 16S ribosomal RNA. The protein is Small ribosomal subunit protein uS17 of Pseudoalteromonas atlantica (strain T6c / ATCC BAA-1087).